The chain runs to 178 residues: Small ribosomal subunit protein uS5 (178 aa).

The S5 DRBM domain occupies 17 to 80; it reads FEERIVEIRR…AAARASVVEI (64 aa).

Belongs to the universal ribosomal protein uS5 family. As to quaternary structure, part of the 30S ribosomal subunit. Contacts proteins S4 and S8.

With S4 and S12 plays an important role in translational accuracy. Functionally, located at the back of the 30S subunit body where it stabilizes the conformation of the head with respect to the body. This Pseudothermotoga lettingae (strain ATCC BAA-301 / DSM 14385 / NBRC 107922 / TMO) (Thermotoga lettingae) protein is Small ribosomal subunit protein uS5.